A 324-amino-acid chain; its full sequence is MIQVLLVIICLAVFPYQVSSIILESGNINNYEVVYPQKVTALPKGAIQQLEQKYEDAMQYQFKVKGEPVVLHLEKNKDFFPEDYSETHYSPDDREITTNPPVEDHCYYYGHIQNDADSTASISACNGLKGYFTLRGVTYLIEPLKIPESEAHAIYKYENVEKEDEDPKKCEFRRAGTECRPARSECDVAEYCTGQSAECPTDVFHSNGKPCLNNFGYCYNGNCPIMYHQCYALFGPNATVGQDGCFEWNKKGESYFYCRKENDVPIPCAPEDIKCGRLFCELIKNTCKYDYSEDPDYGMVDHGTKCGDGKVCINRHCVDVTTAY.

The N-terminal stretch at 1–20 (MIQVLLVIICLAVFPYQVSS) is a signal peptide. Positions 21–173 (IILESGNINN…DEDPKKCEFR (153 aa)) are cleaved as a propeptide — or 174 (in a minor form). Residues 168-207 (KKCEFRRAGTECRPARSECDVAEYCTGQSAECPTDVFHSN) enclose the Disintegrin; truncated domain. Residues 179–192 (CRPARSECDVAEYC) form an inhibits platelet aggregation region. Intrachain disulfides connect cysteine 179–cysteine 199, cysteine 186–cysteine 218, cysteine 192–cysteine 199, cysteine 211–cysteine 223, cysteine 230–cysteine 280, cysteine 245–cysteine 287, cysteine 258–cysteine 268, cysteine 275–cysteine 312, and cysteine 306–cysteine 317. Residues 185–187 (ECD) carry the D/ECD-tripeptide motif. Residues aspartate 187 and glutamate 190 each contribute to the Ca(2+) site. Ca(2+) is bound by residues aspartate 202 and valine 203. Residue asparagine 237 is glycosylated (N-linked (GlcNAc...) asparagine).

The protein belongs to the venom metalloproteinase (M12B) family. P-III subfamily. P-IIIe sub-subfamily. As to quaternary structure, monomer. Is able to form a homodimer. Post-translationally, N-glycosylated. Exists in at least six differently N-glycosylated forms. The glycans likely have a stabilizing purpose. Cys-199 forms a disulfide bond with Cys-192 in 90% and with Cys-179 in 10% of the protein molecules; alternative disulfide bonds may have a major effect on the conformation of the protein. Expressed by the venom gland (at protein level). Expressed by the venom gland.

The protein localises to the secreted. Its activity is regulated as follows. Activity may be regulated by the intramolecular thiol-disulfide exchange or disulfide bond switching. Functionally, abolishes platelet aggregation induced by collagen, ADP (IC(50)=292 nM) and arachidonic-acid. The inhibition of collagen-induced platelet aggregation may be due to its ability to bind collagen and block the binding site on collagen for platelets and/or to its ability to bind to the platelet alpha-2/beta-1 collagen receptor (ITGA2/ITGB1) to block its interaction with collagen and hence prevent platelet stimulation. The inhibition of ADP- or arachidonic-acid-induced platelet aggregation may be due to it acting as an antagonist of the ADP receptors or thromboxane-prostanoid receptors of the platelets, respectively. Does not interact with integrins alpha-IIb (ITGA2B) or beta-3 (ITGB3) nor platelet glycoproteins VI (GP6) or IX (GP9) in vitro, however, the detection is dependent on experimental conditions and may happen in vivo. Able to bind to platelet glycoprotein Ib alpha chain (GP1BA) receptor in vitro, although this interaction may have pathologically only limited effect in vivo as it is not able to abolish the von Willebrand factor (vWF)-dependent platelet agglutination induced by ristocetin. Does not affect blood coagulation. This Vipera ammodytes ammodytes (Western sand viper) protein is Disintegrin-like/cysteine-rich protein MPIII-3.